The chain runs to 200 residues: Large ribosomal subunit protein uL4 (200 aa).

Positions glycine 38–arginine 68 are disordered. Residues glycine 54 to glycine 65 show a composition bias toward basic residues.

This sequence belongs to the universal ribosomal protein uL4 family. As to quaternary structure, part of the 50S ribosomal subunit.

Its function is as follows. One of the primary rRNA binding proteins, this protein initially binds near the 5'-end of the 23S rRNA. It is important during the early stages of 50S assembly. It makes multiple contacts with different domains of the 23S rRNA in the assembled 50S subunit and ribosome. Forms part of the polypeptide exit tunnel. The protein is Large ribosomal subunit protein uL4 of Pseudomonas syringae pv. tomato (strain ATCC BAA-871 / DC3000).